Reading from the N-terminus, the 269-residue chain is MSQKIYFKITNDKECHNGFQYKDGLNILQEKFNDNLEDSCVPGRLYFTKPKHILKYLDYGIYLREIYLPTDNPDFKMIRDPTGDKYGANMIILGERRDLRNPDTWKYMVSKGVDIRAEDDYAVKWASKNGHLKVVEYLVSLGADIKSDGDYAVRWASENGHIDVVKYLVSQNADIRADNDYAVKWASSNGHLEVVKYLVSQGANIREQNDYAIRLASQYGHLEVVKYLISLGADIRADNDCAVRLASENGHIEIVNYLISQGADIRAKK.

5 ANK repeats span residues 118–147 (EDDY…DIKS), 148–177 (DGDY…DIRA), 179–207 (NDYA…NIRE), 208–237 (QNDY…DIRA), and 238–267 (DNDC…DIRA).

In Acanthamoeba polyphaga (Amoeba), this protein is Putative ankyrin repeat protein L23.